The sequence spans 238 residues: NADH-quinone oxidoreductase subunit C (238 aa).

The interval 1–20 (MSSPDQNPSDAAGQTGSSNE) is disordered.

It belongs to the complex I 30 kDa subunit family. NDH-1 is composed of 14 different subunits. Subunits NuoB, C, D, E, F, and G constitute the peripheral sector of the complex.

It is found in the cell membrane. The enzyme catalyses a quinone + NADH + 5 H(+)(in) = a quinol + NAD(+) + 4 H(+)(out). Its function is as follows. NDH-1 shuttles electrons from NADH, via FMN and iron-sulfur (Fe-S) centers, to quinones in the respiratory chain. The immediate electron acceptor for the enzyme in this species is believed to be a menaquinone. Couples the redox reaction to proton translocation (for every two electrons transferred, four hydrogen ions are translocated across the cytoplasmic membrane), and thus conserves the redox energy in a proton gradient. The chain is NADH-quinone oxidoreductase subunit C from Mycobacterium marinum (strain ATCC BAA-535 / M).